A 364-amino-acid polypeptide reads, in one-letter code: Long-wave-sensitive opsin 1 (364 aa).

Over 1-52 the chain is Extracellular; that stretch reads MAHAWGPQRLAGGQPQANFEESTQGSIFTYTNSNSTRDPFEGPNYHIAPRWV. Ser22 is a glycosylation site (O-linked (GlcNAc) serine). Asn34 carries an N-linked (GlcNAc...) asparagine glycan. The chain crosses the membrane as a helical span at residues 53–77; it reads YHLTSAWMVFVVIASVFTNGLVLAA. At 78–89 the chain is on the cytoplasmic side; sequence TMRFKKLRHPLN. A helical transmembrane segment spans residues 90–115; that stretch reads WILVNLAIADLAETIIASTISVVNQM. The Extracellular segment spans residues 116–129; the sequence is YGYFVLGHPLCVVE. A disulfide bond links Cys126 and Cys203. The helical transmembrane segment at 130–149 threads the bilayer; sequence GYTVSLCGITGLWSLAIISW. Over 150 to 168 the chain is Cytoplasmic; it reads ERWMVVCKPFGNVRFDAKL. The chain crosses the membrane as a helical span at residues 169–192; the sequence is AITGIAFSWIWAAVWTAPPIFGWS. The Extracellular segment spans residues 193 to 218; sequence RYWPHGLKTSCGPDVFSGSSYPGVQS. Residues 219 to 246 traverse the membrane as a helical segment; the sequence is YMIVLMITCCFIPLSVIILCYLQVWLAI. Residues 247 to 268 lie on the Cytoplasmic side of the membrane; that stretch reads RAVAKQQKESESTQKAEKEVTR. The chain crosses the membrane as a helical span at residues 269–292; that stretch reads MVMVMIFAYCLCWGPYTFFACFAA. At 293–300 the chain is on the extracellular side; the sequence is AHPGYAFH. Residues 301–325 form a helical membrane-spanning segment; the sequence is PLVAALPAYFAKSATIYNPIIYVFM. Lys312 is subject to N6-(retinylidene)lysine. Topologically, residues 326–364 are cytoplasmic; sequence NRQFRNCILQLFGKKVDDSSELSSVSKTEASSVSSVSPA.

It belongs to the G-protein coupled receptor 1 family. Opsin subfamily. In terms of processing, phosphorylated on some or all of the serine and threonine residues present in the C-terminal region. Expressed in retina (at protein level). Expressed in cone and/or rod photoreceptor cells (at protein level).

It localises to the membrane. Visual pigments are the light-absorbing molecules that mediate vision. They consist of an apoprotein, opsin, covalently linked to cis-retinal. In Bos taurus (Bovine), this protein is Long-wave-sensitive opsin 1 (OPN1LW).